We begin with the raw amino-acid sequence, 501 residues long: Lysine--tRNA ligase (501 aa).

Residues Glu410 and Glu417 each coordinate Mg(2+).

Belongs to the class-II aminoacyl-tRNA synthetase family. Homodimer. The cofactor is Mg(2+).

The protein resides in the cytoplasm. The catalysed reaction is tRNA(Lys) + L-lysine + ATP = L-lysyl-tRNA(Lys) + AMP + diphosphate. The sequence is that of Lysine--tRNA ligase from Shewanella halifaxensis (strain HAW-EB4).